Consider the following 230-residue polypeptide: Sugar fermentation stimulation protein homolog (230 aa).

This sequence belongs to the SfsA family.

This is Sugar fermentation stimulation protein homolog from Clostridium perfringens (strain ATCC 13124 / DSM 756 / JCM 1290 / NCIMB 6125 / NCTC 8237 / Type A).